Consider the following 333-residue polypeptide: Foldase protein PrsA (333 aa).

Positions 1 to 22 are cleaved as a signal peptide; the sequence is MKKSTKLLAGIVTLASAMTLAA. Cys-23 is lipidated: N-palmitoyl cysteine. Residue Cys-23 is the site of S-diacylglycerol cysteine attachment. One can recognise a PpiC domain in the interval 145-240; it reads TPEMTTQVIT…NKFYIVKVTK (96 aa). The tract at residues 301 to 333 is disordered; sequence DKKASKANTSKSDQKTSSDSSKDSQSSKSKSEK. Over residues 312–322 the composition is skewed to basic and acidic residues; the sequence is SDQKTSSDSSK. Residues 323–333 are compositionally biased toward low complexity; sequence DSQSSKSKSEK.

The protein belongs to the PrsA family.

It localises to the cell membrane. It carries out the reaction [protein]-peptidylproline (omega=180) = [protein]-peptidylproline (omega=0). In terms of biological role, plays a major role in protein secretion by helping the post-translocational extracellular folding of several secreted proteins. This chain is Foldase protein PrsA, found in Streptococcus equi subsp. zooepidemicus (strain MGCS10565).